The following is a 119-amino-acid chain: NADH dehydrogenase [ubiquinone] 1 subunit C2 (119 aa).

A helical membrane pass occupies residues 56 to 75; sequence GLHRQLLYITAFFFAGYYLV.

This sequence belongs to the complex I NDUFC2 subunit family. In terms of assembly, complex I is composed of 45 different subunits. Interacts with TMEM242.

It localises to the mitochondrion inner membrane. In terms of biological role, accessory subunit of the mitochondrial membrane respiratory chain NADH dehydrogenase (Complex I), that is believed not to be involved in catalysis but required for the complex assembly. Complex I functions in the transfer of electrons from NADH to the respiratory chain. The immediate electron acceptor for the enzyme is believed to be ubiquinone. The polypeptide is NADH dehydrogenase [ubiquinone] 1 subunit C2 (Pongo pygmaeus (Bornean orangutan)).